Consider the following 364-residue polypeptide: E3 ubiquitin-protein ligase rnf146 (364 aa).

The disordered stretch occupies residues 18 to 37; that stretch reads KKVSGEAVPEGSGSPSSPSL. Low complexity predominate over residues 22–34; sequence GEAVPEGSGSPSS. Residues 42-80 form an RING-type zinc finger; that stretch reads CPICLQSCVHPVRLPCRHIFCFLCVKGASWHSKRCALCR. The 77-residue stretch at 102–178 folds into the WWE domain; the sequence is SATGGCGTGS…EHGRRRRMKR (77 aa). Tyrosine 118, arginine 121, tryptophan 125, tyrosine 155, glutamine 164, arginine 174, and lysine 186 together coordinate a glycoprotein. Disordered regions lie at residues 217–262 and 279–364; these read AAAE…PASS and NEQE…VTKV. Composition is skewed to acidic residues over residues 281–295 and 308–322; these read QEPE…DDSA and TSDD…DENE.

Its subcellular location is the cytoplasm. The protein resides in the cytosol. It localises to the nucleus. The enzyme catalyses S-ubiquitinyl-[E2 ubiquitin-conjugating enzyme]-L-cysteine + [acceptor protein]-L-lysine = [E2 ubiquitin-conjugating enzyme]-L-cysteine + N(6)-ubiquitinyl-[acceptor protein]-L-lysine.. It participates in protein modification; protein ubiquitination. In terms of biological role, E3 ubiquitin-protein ligase that specifically binds poly-ADP-ribosylated proteins and mediates their ubiquitination and subsequent degradation. May regulate many important biological processes, such as cell survival and DNA damage response. Acts as an activator of the Wnt signaling pathway by mediating the ubiquitination of poly-ADP-ribosylated proteins. Neuroprotective protein. Protects against cell death induced by DNA damaging agents and rescues cells from G1 arrest. Promotes cell survival after gamma-irradiation. Facilitates DNA repair. The polypeptide is E3 ubiquitin-protein ligase rnf146 (rnf146) (Danio rerio (Zebrafish)).